The sequence spans 179 residues: Replication restart protein DnaT (179 aa).

Residues 156–179 are disordered; that stretch reads GGLPKRDVNTVSEPDSQIPPGFRG.

The protein belongs to the DnaT family. Homooligomerizes. Interacts with PriB. Component of the replication restart primosome. Primosome assembly occurs via a 'hand-off' mechanism. PriA binds to replication forks, subsequently PriB then DnaT bind; DnaT then displaces ssDNA to generate the helicase loading substrate.

Its function is as follows. Involved in the restart of stalled replication forks, which reloads the replicative helicase on sites other than the origin of replication. Can function in multiple replication restart pathways. Displaces ssDNA from a PriB-ssDNA complex. Probably forms a spiral filament on ssDNA. This chain is Replication restart protein DnaT, found in Escherichia coli O157:H7.